Consider the following 83-residue polypeptide: Mu-theraphotoxin-Hhn2n (83 aa).

Residues 1–21 (MKASMYLALAGLVLLFVVGYA) form the signal peptide. The propeptide occupies 22–48 (SESEEKEFPRELLSKIFAVDDFKGEER). 3 cysteine pairs are disulfide-bonded: Cys-50-Cys-65, Cys-57-Cys-70, and Cys-64-Cys-77. Leu-81 is modified (leucine amide).

Belongs to the neurotoxin 10 (Hwtx-1) family. 15 (Hntx-3) subfamily. Monomer. Expressed by the venom gland.

The protein localises to the secreted. Its function is as follows. Lethal neurotoxin. Selectively blocks tetrodotoxin-sensitive voltage-gated sodium channels (Nav). Does not affect tetrodotoxin-resistant voltage-gated sodium channels or calcium channels. The sequence is that of Mu-theraphotoxin-Hhn2n from Cyriopagopus hainanus (Chinese bird spider).